Consider the following 477-residue polypeptide: Ribulose bisphosphate carboxylase large chain (477 aa).

A propeptide spanning residues 1 to 2 (MS) is cleaved from the precursor. An N-acetylproline modification is found at Pro3. Asn123 and Thr173 together coordinate substrate. Lys175 (proton acceptor) is an active-site residue. Residue Lys177 coordinates substrate. Positions 201, 203, and 204 each coordinate Mg(2+). Lys201 is subject to N6-carboxylysine. His294 serves as the catalytic Proton acceptor. Positions 295, 327, and 379 each coordinate substrate.

It belongs to the RuBisCO large chain family. Type I subfamily. As to quaternary structure, heterohexadecamer of 8 large chains and 8 small chains; disulfide-linked. The disulfide link is formed within the large subunit homodimers. Requires Mg(2+) as cofactor. Post-translationally, the disulfide bond which can form in the large chain dimeric partners within the hexadecamer appears to be associated with oxidative stress and protein turnover.

It localises to the plastid. The protein resides in the chloroplast. It catalyses the reaction 2 (2R)-3-phosphoglycerate + 2 H(+) = D-ribulose 1,5-bisphosphate + CO2 + H2O. It carries out the reaction D-ribulose 1,5-bisphosphate + O2 = 2-phosphoglycolate + (2R)-3-phosphoglycerate + 2 H(+). Its function is as follows. RuBisCO catalyzes two reactions: the carboxylation of D-ribulose 1,5-bisphosphate, the primary event in carbon dioxide fixation, as well as the oxidative fragmentation of the pentose substrate in the photorespiration process. Both reactions occur simultaneously and in competition at the same active site. The chain is Ribulose bisphosphate carboxylase large chain from Avena sativa (Oat).